The following is a 183-amino-acid chain: Guanylate kinase (183 aa).

The region spanning 4-182 (GRVVVLTGPS…AITALEAAIF (179 aa)) is the Guanylate kinase-like domain. 11–18 (GPSGVGKG) serves as a coordination point for ATP.

This sequence belongs to the guanylate kinase family.

It is found in the cytoplasm. The catalysed reaction is GMP + ATP = GDP + ADP. The enzyme catalyses dZMP + ATP = dZDP + ADP. It participates in purine metabolism. Its function is as follows. Essential for recycling GMP and indirectly, cGMP. Functionally, (Microbial infection) Catalyzes the phosphorylation of dZMP to dZDP, when the bacterium is infected by a phage that produces the substrate for the synthesis of dZTP (2- amino-2'-deoxyadenosine 5'-triphosphate), which is then used by the phage as a DNA polymerase substrate. The sequence is that of Guanylate kinase from Synechococcus elongatus (strain ATCC 33912 / PCC 7942 / FACHB-805) (Anacystis nidulans R2).